Consider the following 208-residue polypeptide: ATP-dependent Clp protease proteolytic subunit (208 aa).

Serine 107 acts as the Nucleophile in catalysis. The active site involves histidine 132.

The protein belongs to the peptidase S14 family. Fourteen ClpP subunits assemble into 2 heptameric rings which stack back to back to give a disk-like structure with a central cavity, resembling the structure of eukaryotic proteasomes.

The protein localises to the cytoplasm. It carries out the reaction Hydrolysis of proteins to small peptides in the presence of ATP and magnesium. alpha-casein is the usual test substrate. In the absence of ATP, only oligopeptides shorter than five residues are hydrolyzed (such as succinyl-Leu-Tyr-|-NHMec, and Leu-Tyr-Leu-|-Tyr-Trp, in which cleavage of the -Tyr-|-Leu- and -Tyr-|-Trp bonds also occurs).. Its function is as follows. Cleaves peptides in various proteins in a process that requires ATP hydrolysis. Has a chymotrypsin-like activity. Plays a major role in the degradation of misfolded proteins. The polypeptide is ATP-dependent Clp protease proteolytic subunit (Methylobacterium radiotolerans (strain ATCC 27329 / DSM 1819 / JCM 2831 / NBRC 15690 / NCIMB 10815 / 0-1)).